The following is a 411-amino-acid chain: RNA binding protein fox-1 homolog 2 (411 aa).

The interval 16–175 (TRGTKRESDQ…SETKASPKRL (160 aa)) is disordered. Composition is skewed to polar residues over residues 58–83 (PVSQAYQGFAPLNSQGNQEPTATPDT) and 99–119 (NGLSTDYGSQHTQDYATQSTE). A compositionally biased stretch (low complexity) spans 135 to 165 (SAPATSTANASSTTDGSQTEGQQSQSQNNEN). Residues 173 to 249 (KRLHVSNIPF…RKIEVNNATA (77 aa)) form the RRM domain.

Interacts with papd4/gld2.

The protein resides in the nucleus. The protein localises to the cytoplasm. In terms of biological role, RNA-binding protein that regulates alternative splicing events by binding to 5'-UGCAUGU-3' elements. Regulates alternative splicing of tissue-specific exons. In Xenopus laevis (African clawed frog), this protein is RNA binding protein fox-1 homolog 2 (rbfox2).